A 330-amino-acid polypeptide reads, in one-letter code: Geranylgeranyl diphosphate synthase (330 aa).

3 residues coordinate isopentenyl diphosphate: Lys43, Arg46, and His75. Positions 82 and 86 each coordinate Mg(2+). An all-trans-polyprenyl diphosphate is bound at residue Arg91. Residue Arg92 participates in isopentenyl diphosphate binding. Residues Lys175, Thr176, Gln213, Lys230, and Lys240 each contribute to the an all-trans-polyprenyl diphosphate site.

The protein belongs to the FPP/GGPP synthase family. Mg(2+) is required as a cofactor.

It carries out the reaction isopentenyl diphosphate + (2E,6E)-farnesyl diphosphate = (2E,6E,10E)-geranylgeranyl diphosphate + diphosphate. It participates in isoprenoid biosynthesis; geranylgeranyl diphosphate biosynthesis; geranylgeranyl diphosphate from farnesyl diphosphate and isopentenyl diphosphate: step 1/1. In terms of biological role, catalyzes the condensation of isopentenyl pyrophosphate with the allylic pyrophosphates to yield geranylgeranyl diphosphate (GGPP) which is a precursor of the ether-linked lipids. It is able to use dimethylallyl diphosphate (DMAPP), geranyl diphosphate (GPP), and (all-E)-geranyl diphosphate (E-FPP) as an allylic substrate. In Sulfolobus acidocaldarius (strain ATCC 33909 / DSM 639 / JCM 8929 / NBRC 15157 / NCIMB 11770), this protein is Geranylgeranyl diphosphate synthase (gds).